A 626-amino-acid chain; its full sequence is Methanol dehydrogenase [cytochrome c] subunit 1 (626 aa).

Positions 1-27 are cleaved as a signal peptide; the sequence is MSRFVTSVSALAMLALAPAALSSGAYA. Residues Cys-130 and Cys-131 are joined by a disulfide bond. Positions 204 and 288 each coordinate Ca(2+). The Proton acceptor role is filled by Asp-330. Residues Cys-413 and Cys-442 are joined by a disulfide bond.

Belongs to the bacterial PQQ dehydrogenase family. As to quaternary structure, heterotetramer composed of 2 alpha and 2 beta subunits. Pyrroloquinoline quinone is required as a cofactor. Requires Ca(2+) as cofactor.

It is found in the cell inner membrane. It catalyses the reaction 2 Fe(III)-[cytochrome cL] + a primary alcohol = 2 Fe(II)-[cytochrome cL] + an aldehyde + 2 H(+). In terms of biological role, catalyzes the oxidation of primary alcohols including methanol. In Methylorubrum extorquens (strain ATCC 14718 / DSM 1338 / JCM 2805 / NCIMB 9133 / AM1) (Methylobacterium extorquens), this protein is Methanol dehydrogenase [cytochrome c] subunit 1 (moxF).